The sequence spans 484 residues: Glutamate--tRNA ligase (484 aa).

The short motif at 11-21 is the 'HIGH' region element; sequence PSPTGLLHIGN. The 'KMSKS' region signature appears at 255 to 259; the sequence is KLSKR. K258 lines the ATP pocket.

The protein belongs to the class-I aminoacyl-tRNA synthetase family. Glutamate--tRNA ligase type 1 subfamily. As to quaternary structure, monomer.

The protein localises to the cytoplasm. The enzyme catalyses tRNA(Glu) + L-glutamate + ATP = L-glutamyl-tRNA(Glu) + AMP + diphosphate. Its function is as follows. Catalyzes the attachment of glutamate to tRNA(Glu) in a two-step reaction: glutamate is first activated by ATP to form Glu-AMP and then transferred to the acceptor end of tRNA(Glu). This is Glutamate--tRNA ligase from Streptococcus agalactiae serotype III (strain NEM316).